Here is a 263-residue protein sequence, read N- to C-terminus: Uroplakin-3b-like protein 1 (263 aa).

Residues 1–33 (MDNSWRLGPAIGLSAGQSQLLVSLLLLLTRVQP) form the signal peptide. At 34–204 (GTDVAAPEHI…PGPQSPGTVV (171 aa)) the chain is on the extracellular side. N-linked (GlcNAc...) asparagine glycosylation is found at Asn51, Asn76, and Asn91. The helical transmembrane segment at 205 to 225 (IIAILSILLAVLLTVLLAVLI) threads the bilayer. The Cytoplasmic portion of the chain corresponds to 226–263 (YTCFNSCRSTSLSGPEEAGSVRRYTTHLAFSTPAEGAS).

It belongs to the uroplakin-3 family.

Its subcellular location is the membrane. This chain is Uroplakin-3b-like protein 1, found in Homo sapiens (Human).